We begin with the raw amino-acid sequence, 171 residues long: Translationally-controlled tumor protein homolog (171 aa).

Residues 1 to 171 form the TCTP domain; sequence MIIYKDIITG…FKDGLEIEKC (171 aa).

Belongs to the TCTP family.

It is found in the cytoplasm. In terms of biological role, involved in calcium binding and microtubule stabilization. In Labeo rohita (Indian major carp), this protein is Translationally-controlled tumor protein homolog (tpt1).